Reading from the N-terminus, the 946-residue chain is MKPLSSPLQQYWQTVVERLPEPLAEESLSAQAKLVLTFSDFVQDSVIAHPEWLMELESQPPQADEWQHYAAWLQEALSNVSDEAGLMRELRLFRRRIMVRIAWAQTLALVTEESILQQLSYLAETLIVAARDWLYDACCREWGTPCNAQGEAQPLLILGMGKLGGGELNFSSDIDLIFAWPEHGCTQGGRRELDNAQFFTRMGQRLIKVLDQPTQDGFVYRVDMRLRPFGESGPLVLSFAALEDYYQEQGRDWERYAMVKARIMGDSEGVYANELRAMLRPFVFRRYIDFSVIQSLRNMKGMIAREVRRRGLTDNIKLGAGGIREIEFIVQVFQLIRGGREPSLQSRSLLPTLSVIAALHLFSENDAKQLRVAYLFLRRLENLLQSINDEQTQTLPSDELNRARLAWAMDFADWPQLTGVLTAHMTNVRRVFNELIGDDESETQEESLSEQWRELWQDALQEDDTTPVLAHLSEDDRKQVLTLIADFRKELDKRTIGPRGRQVLDHLMPHLLSDVCAREDAAVTLSRITALLVGIVTRTTYLELLSEFPAALKHLISLCAASPMIASQLARYPLLLDELLDPNTLYQPTATDAYRDELRQYLLRVPEDDEEQQLEALRQFKQAQLLRIAAADIAGTLPVMKVSDHLTWLAEAMIDAVVQQAWVQMVARYGKPNHLNEREGRGFAVVGYGKLGGWELGYSSDLDLIFLHDCPMDAMTDGEREIDVRQFYLRLAQRIMHLFSTRTSSGILYEVDARLRPSGAAGMLVTSAEAFADYQKNEAWTWEHQALVRARVVYGDPQLTAHFDAVRREIMALPREGKTLQTEVREMREKMRAHLGNKHRDRFDIKADEGGITDIEFITQYLVLRYAHEKPKLTRWSDNVRILELLAQNDIMEEQEAMVLTRAYTTLRDELHHLALQELPGHVSEDCFTAERDLVRASWQKWLVEE.

Residues 1–440 (MKPLSSPLQQ…VFNELIGDDE (440 aa)) are adenylyl removase. Residues 449 to 946 (SEQWRELWQD…ASWQKWLVEE (498 aa)) are adenylyl transferase.

It belongs to the GlnE family. The cofactor is Mg(2+).

It carries out the reaction [glutamine synthetase]-O(4)-(5'-adenylyl)-L-tyrosine + phosphate = [glutamine synthetase]-L-tyrosine + ADP. The catalysed reaction is [glutamine synthetase]-L-tyrosine + ATP = [glutamine synthetase]-O(4)-(5'-adenylyl)-L-tyrosine + diphosphate. In terms of biological role, involved in the regulation of glutamine synthetase GlnA, a key enzyme in the process to assimilate ammonia. When cellular nitrogen levels are high, the C-terminal adenylyl transferase (AT) inactivates GlnA by covalent transfer of an adenylyl group from ATP to specific tyrosine residue of GlnA, thus reducing its activity. Conversely, when nitrogen levels are low, the N-terminal adenylyl removase (AR) activates GlnA by removing the adenylyl group by phosphorolysis, increasing its activity. The regulatory region of GlnE binds the signal transduction protein PII (GlnB) which indicates the nitrogen status of the cell. This is Bifunctional glutamine synthetase adenylyltransferase/adenylyl-removing enzyme from Shigella dysenteriae serotype 1 (strain Sd197).